The chain runs to 360 residues: Homoserine O-acetyltransferase (360 aa).

In terms of domain architecture, AB hydrolase-1 spans 41–344; that stretch reads NAILICHALT…DYGHDAFLVD (304 aa). Ser144 serves as the catalytic Nucleophile. Arg213 contacts substrate. Residues Asp305 and His338 contribute to the active site. Asp339 provides a ligand contact to substrate.

The protein belongs to the AB hydrolase superfamily. MetX family. In terms of assembly, homodimer.

It is found in the cytoplasm. It carries out the reaction L-homoserine + acetyl-CoA = O-acetyl-L-homoserine + CoA. Its pathway is amino-acid biosynthesis; L-methionine biosynthesis via de novo pathway; O-acetyl-L-homoserine from L-homoserine: step 1/1. Transfers an acetyl group from acetyl-CoA to L-homoserine, forming acetyl-L-homoserine. The protein is Homoserine O-acetyltransferase of Pasteurella multocida (strain Pm70).